Reading from the N-terminus, the 280-residue chain is Ribosomal RNA small subunit methyltransferase A (280 aa).

Positions 13, 15, 40, 61, 85, and 105 each coordinate S-adenosyl-L-methionine.

This sequence belongs to the class I-like SAM-binding methyltransferase superfamily. rRNA adenine N(6)-methyltransferase family. RsmA subfamily.

Its subcellular location is the cytoplasm. The enzyme catalyses adenosine(1518)/adenosine(1519) in 16S rRNA + 4 S-adenosyl-L-methionine = N(6)-dimethyladenosine(1518)/N(6)-dimethyladenosine(1519) in 16S rRNA + 4 S-adenosyl-L-homocysteine + 4 H(+). In terms of biological role, specifically dimethylates two adjacent adenosines (A1518 and A1519) in the loop of a conserved hairpin near the 3'-end of 16S rRNA in the 30S particle. May play a critical role in biogenesis of 30S subunits. This Phocaeicola vulgatus (strain ATCC 8482 / DSM 1447 / JCM 5826 / CCUG 4940 / NBRC 14291 / NCTC 11154) (Bacteroides vulgatus) protein is Ribosomal RNA small subunit methyltransferase A.